A 262-amino-acid chain; its full sequence is Acyl-[acyl-carrier-protein]--UDP-N-acetylglucosamine O-acyltransferase (262 aa).

This sequence belongs to the transferase hexapeptide repeat family. LpxA subfamily. Homotrimer.

The protein resides in the cytoplasm. It catalyses the reaction a (3R)-hydroxyacyl-[ACP] + UDP-N-acetyl-alpha-D-glucosamine = a UDP-3-O-[(3R)-3-hydroxyacyl]-N-acetyl-alpha-D-glucosamine + holo-[ACP]. Its pathway is glycolipid biosynthesis; lipid IV(A) biosynthesis; lipid IV(A) from (3R)-3-hydroxytetradecanoyl-[acyl-carrier-protein] and UDP-N-acetyl-alpha-D-glucosamine: step 1/6. Functionally, involved in the biosynthesis of lipid A, a phosphorylated glycolipid that anchors the lipopolysaccharide to the outer membrane of the cell. The chain is Acyl-[acyl-carrier-protein]--UDP-N-acetylglucosamine O-acyltransferase from Burkholderia thailandensis (strain ATCC 700388 / DSM 13276 / CCUG 48851 / CIP 106301 / E264).